The chain runs to 617 residues: V-type proton ATPase catalytic subunit A (617 aa).

An ATP-binding site is contributed by 250 to 257 (GAFGCGKT). Serine 384 carries the post-translational modification Phosphoserine; by AMPK.

This sequence belongs to the ATPase alpha/beta chains family. In terms of assembly, V-ATPase is a heteromultimeric enzyme made up of two complexes: the ATP-hydrolytic V1 complex and the proton translocation V0 complex. The V1 complex consists of three catalytic AB heterodimers that form a heterohexamer, three peripheral stalks each consisting of EG heterodimers, one central rotor including subunits D and F, and the regulatory subunits C and H. The proton translocation complex V0 consists of the proton transport subunit a, a ring of proteolipid subunits c9c'', rotary subunit d, subunits e and f, and the accessory subunits ATP6AP1/Ac45 and ATP6AP2/PRR. Interacts with the V0 complex V-ATPase subunit a4 ATP6V0A4. Interacts with WFS1. Interacts with alpha-crystallin B chain/CRYAB and with MTOR, forming a ternary complex. In terms of processing, phosphorylation at Ser-384 by AMPK down-regulates its enzyme activity.

It localises to the cytoplasm. The protein resides in the cytosol. It is found in the cytoplasmic vesicle. The protein localises to the secretory vesicle. Its subcellular location is the clathrin-coated vesicle membrane. It localises to the lysosome. It catalyses the reaction ATP + H2O + 4 H(+)(in) = ADP + phosphate + 5 H(+)(out). Its activity is regulated as follows. ATP hydrolysis occurs at the interface between the nucleotide-binding domains of subunits A and B. ATP hydrolysis triggers a conformational change in the subunits D and F, which induces a shift of subunit d. The c-ring is subsequently rotated and results in a continuous proton translocation across the membrane. Catalytic subunit of the V1 complex of vacuolar(H+)-ATPase (V-ATPase), a multisubunit enzyme composed of a peripheral complex (V1) that hydrolyzes ATP and a membrane integral complex (V0) that translocates protons. V-ATPase is responsible for acidifying and maintaining the pH of intracellular compartments and in some cell types, is targeted to the plasma membrane, where it is responsible for acidifying the extracellular environment. In aerobic conditions, involved in intracellular iron homeostasis, thus triggering the activity of Fe(2+) prolyl hydroxylase (PHD) enzymes, and leading to HIF1A hydroxylation and subsequent proteasomal degradation. May play a role in neurite development and synaptic connectivity. The polypeptide is V-type proton ATPase catalytic subunit A (Atp6v1a) (Mus musculus (Mouse)).